The following is a 425-amino-acid chain: UPF0597 protein Swoo_4889 (425 aa).

This sequence belongs to the UPF0597 family.

The chain is UPF0597 protein Swoo_4889 from Shewanella woodyi (strain ATCC 51908 / MS32).